Consider the following 220-residue polypeptide: uncharacterized protein (220 aa).

A disordered region spans residues 196–220 (KDDNSKDDNNDSEDLSKQIDNLKLD).

This is an uncharacterized protein from Invertebrate iridescent virus 6 (IIV-6).